Reading from the N-terminus, the 298-residue chain is MAYQHCPFDTLLILDFETTSDAANQDYPCEVIQFAIVAYDVPNDKIREDISFNKYVKPVLNRTLTKNCVDFTGIPQRSIDTADTFDVVYEQFQQWLITLGLEEGKFAFVCDSRQDLWRIAQYQMKLSNIQMPAFFRQYINLYKIFTNEMDRMGPKELSATTNIGKMNEYYDLPTIGRAHDAMDDCLNIATILQRMINMGAKVTVNELLTCCASWRRQPLVYNKEWRSSFMDAGKIFERVLPLVVTTIRAGDFRLEMYGVCRYCRKGMDVCGTSHQQTPHDLYKNEEDPIHFAKIAGYY.

An Exonuclease domain is found at 12–192 (LILDFETTSD…DDCLNIATIL (181 aa)). Mg(2+) is bound by residues D15, E17, and D184. Positions 210, 260, 263, and 270 each coordinate Zn(2+).

Homodimer (via C-terminus). Interacts with crn-5; interaction promotes the DNase activity of crn-4. Interacts with cps-6, crn-1 and cyn-13. Mg(2+) serves as cofactor.

Its activity is regulated as follows. Exonuclease activity is inhibited in vitro by pontacyl violet 6R (PV6R), p-chloromercuriphenyl sulfonate (PCMPS), 5,5'-dithiobis(2-nitrobenzoic acid) (DTNB), aurintricarboxylic acid (ATA), 2-morpholin-4-ylethanesulfonate (MES), 4-[(4,6-dichloro-1,3,5-triazin-2-yl)amino]-2-(3-hydroxy-6-oxoxanthen-9-yl)benzoic acid (DR396) and fmoc-d-Cha-OH (FDCO). Interaction with ssRNA is reduced in vitro by PV6R. Its function is as follows. Possesses 3'-&gt;5' exoribonuclease activity in digestion of DNA and RNA. Cleaves nucleic acid substrates with efficiencies in the following order: single-stranded RNA (ssRNA) &gt; double-stranded DNA (dsDNA) &gt; single-stranded DNA (ssDNA). Involved in apoptotic DNA degradation. This chain is 3'-5' exonuclease crn-4 (crn-4), found in Caenorhabditis elegans.